We begin with the raw amino-acid sequence, 252 residues long: GPI alpha-1,4-mannosyltransferase I, stabilizing subunit (252 aa).

Positions 1 to 22 (MAASALAWLLLWAAGLVGRLAA) are cleaved as a signal peptide. Asn97 and Asn209 each carry an N-linked (GlcNAc...) asparagine glycan. A helical membrane pass occupies residues 225 to 245 (VCSVTLLITVLCSTLILLAVF).

The protein belongs to the PIGX family. Part of the glycosylphosphatidylinositol-mannosyltransferase I complex that is composed of PIGM and PIGX. Interacts with PIGM; PIGX stabilizes PIGM.

It is found in the endoplasmic reticulum membrane. The protein operates within glycolipid biosynthesis; glycosylphosphatidylinositol-anchor biosynthesis. In terms of biological role, stabilizing subunit of the glycosylphosphatidylinositol-mannosyltransferase I complex which catalyzes the transfer of the first mannose, via an alpha-1,4 bond from a dolichol-phosphate-mannose (Dol-P-Man) to the glucosaminyl acyl phosphatidylinositol (GlcN-(acyl)PI) intermediate to generate alpha-D-Man-(1-&gt;4)-alpha-D-GlcN-(1-&gt;6)-(1-radyl,2-acyl-sn-glycero-3-phospho)-2-acyl-inositol and participates in the sixth step of the glycosylphosphatidylinositol-anchor biosynthesis. Probably acts by stabilizing the mannosyltransferase PIGM. This chain is GPI alpha-1,4-mannosyltransferase I, stabilizing subunit, found in Rattus norvegicus (Rat).